The sequence spans 150 residues: UPF0178 protein PP_5221 (150 aa).

It belongs to the UPF0178 family.

In Pseudomonas putida (strain ATCC 47054 / DSM 6125 / CFBP 8728 / NCIMB 11950 / KT2440), this protein is UPF0178 protein PP_5221.